The chain runs to 78 residues: Chondrosarcoma-associated gene 1 protein (78 aa).

Residues 1-19 (MSATTACWPAFTVLGEARG) form the signal peptide. The interval 35–78 (KMSRKPRASSPFSNNHPSTPKRFPRQPRREKGPVKEVPGTKGSP) is disordered.

In terms of tissue distribution, expressed in chondrosarcoma, melanoma, cartilage and testis, but not in other normal tissues.

It localises to the cytoplasm. The protein resides in the cytoskeleton. Its subcellular location is the microtubule organizing center. It is found in the centrosome. The protein localises to the spindle pole. In terms of biological role, may play an important role in maintaining centrosome integrity during mitosis. The chain is Chondrosarcoma-associated gene 1 protein from Homo sapiens (Human).